We begin with the raw amino-acid sequence, 160 residues long: MLPLCRLLSRRAQVPSHLSRCLSDSRPPFRIQRLDHLVLTVRNLDKTIKFYTKVLGMEATTFKGGRKALSFGIQKINLHETGKEFEPKASLPTPGSADLCLITETPLTTVVQHLKVCGVPIEEGPVSRTGAVGEITSVYLRDPDHNLIEVSNYESNDKKN.

The VOC domain occupies 33–153 (RLDHLVLTVR…DHNLIEVSNY (121 aa)).

This sequence belongs to the glyoxalase I family.

This Xenopus laevis (African clawed frog) protein is Glyoxalase domain-containing protein 5 (glod5).